Reading from the N-terminus, the 353-residue chain is 3-isopropylmalate dehydrogenase (353 aa).

An NAD(+)-binding site is contributed by 73–86; it reads GPQYDTLDRPLRPE. Substrate contacts are provided by Arg-93, Arg-103, Arg-131, and Asp-220. Mg(2+) is bound by residues Asp-220, Asp-244, and Asp-248. NAD(+) is bound at residue 278–290; sequence GSAPDIAGKNLAN.

Belongs to the isocitrate and isopropylmalate dehydrogenases family. LeuB type 1 subfamily. As to quaternary structure, homodimer. The cofactor is Mg(2+). It depends on Mn(2+) as a cofactor.

It is found in the cytoplasm. The catalysed reaction is (2R,3S)-3-isopropylmalate + NAD(+) = 4-methyl-2-oxopentanoate + CO2 + NADH. It functions in the pathway amino-acid biosynthesis; L-leucine biosynthesis; L-leucine from 3-methyl-2-oxobutanoate: step 3/4. Catalyzes the oxidation of 3-carboxy-2-hydroxy-4-methylpentanoate (3-isopropylmalate) to 3-carboxy-4-methyl-2-oxopentanoate. The product decarboxylates to 4-methyl-2 oxopentanoate. This Thiobacillus denitrificans (strain ATCC 25259 / T1) protein is 3-isopropylmalate dehydrogenase.